Consider the following 357-residue polypeptide: Histidinol-phosphate aminotransferase (357 aa).

At Lys-221 the chain carries N6-(pyridoxal phosphate)lysine.

Belongs to the class-II pyridoxal-phosphate-dependent aminotransferase family. Histidinol-phosphate aminotransferase subfamily. The cofactor is pyridoxal 5'-phosphate.

The enzyme catalyses L-histidinol phosphate + 2-oxoglutarate = 3-(imidazol-4-yl)-2-oxopropyl phosphate + L-glutamate. It participates in amino-acid biosynthesis; L-histidine biosynthesis; L-histidine from 5-phospho-alpha-D-ribose 1-diphosphate: step 7/9. This is Histidinol-phosphate aminotransferase (hisC) from Sulfurisphaera tokodaii (strain DSM 16993 / JCM 10545 / NBRC 100140 / 7) (Sulfolobus tokodaii).